Here is a 227-residue protein sequence, read N- to C-terminus: Cytochrome c oxidase subunit 2 (227 aa).

Over 1–14 (MAYPFQLGLQDATS) the chain is Mitochondrial intermembrane. Residues 15-45 (PIMEELTNFHDHTLMIVFLISSLVLYIISLM) form a helical membrane-spanning segment. Over 46 to 59 (LTTKLTHTSTMDAQ) the chain is Mitochondrial matrix. The chain crosses the membrane as a helical span at residues 60–87 (EVETIWTILPAVILILIALPSLRILYMM). The Mitochondrial intermembrane portion of the chain corresponds to 88 to 227 (DEINNPVLTV…YFENWSASMI (140 aa)). Cu cation contacts are provided by H161, C196, E198, C200, H204, and M207. E198 is a Mg(2+) binding site. The residue at position 218 (Y218) is a Phosphotyrosine.

Belongs to the cytochrome c oxidase subunit 2 family. Component of the cytochrome c oxidase (complex IV, CIV), a multisubunit enzyme composed of 14 subunits. The complex is composed of a catalytic core of 3 subunits MT-CO1, MT-CO2 and MT-CO3, encoded in the mitochondrial DNA, and 11 supernumerary subunits COX4I, COX5A, COX5B, COX6A, COX6B, COX6C, COX7A, COX7B, COX7C, COX8 and NDUFA4, which are encoded in the nuclear genome. The complex exists as a monomer or a dimer and forms supercomplexes (SCs) in the inner mitochondrial membrane with NADH-ubiquinone oxidoreductase (complex I, CI) and ubiquinol-cytochrome c oxidoreductase (cytochrome b-c1 complex, complex III, CIII), resulting in different assemblies (supercomplex SCI(1)III(2)IV(1) and megacomplex MCI(2)III(2)IV(2)). Found in a complex with TMEM177, COA6, COX18, COX20, SCO1 and SCO2. Interacts with TMEM177 in a COX20-dependent manner. Interacts with COX20. Interacts with COX16. It depends on Cu cation as a cofactor.

The protein localises to the mitochondrion inner membrane. It carries out the reaction 4 Fe(II)-[cytochrome c] + O2 + 8 H(+)(in) = 4 Fe(III)-[cytochrome c] + 2 H2O + 4 H(+)(out). Its function is as follows. Component of the cytochrome c oxidase, the last enzyme in the mitochondrial electron transport chain which drives oxidative phosphorylation. The respiratory chain contains 3 multisubunit complexes succinate dehydrogenase (complex II, CII), ubiquinol-cytochrome c oxidoreductase (cytochrome b-c1 complex, complex III, CIII) and cytochrome c oxidase (complex IV, CIV), that cooperate to transfer electrons derived from NADH and succinate to molecular oxygen, creating an electrochemical gradient over the inner membrane that drives transmembrane transport and the ATP synthase. Cytochrome c oxidase is the component of the respiratory chain that catalyzes the reduction of oxygen to water. Electrons originating from reduced cytochrome c in the intermembrane space (IMS) are transferred via the dinuclear copper A center (CU(A)) of subunit 2 and heme A of subunit 1 to the active site in subunit 1, a binuclear center (BNC) formed by heme A3 and copper B (CU(B)). The BNC reduces molecular oxygen to 2 water molecules using 4 electrons from cytochrome c in the IMS and 4 protons from the mitochondrial matrix. The polypeptide is Cytochrome c oxidase subunit 2 (MT-CO2) (Dacnomys millardi (Millard's rat)).